Consider the following 308-residue polypeptide: Phosphoribosylaminoimidazole-succinocarboxamide synthase (308 aa).

The protein belongs to the SAICAR synthetase family.

The enzyme catalyses 5-amino-1-(5-phospho-D-ribosyl)imidazole-4-carboxylate + L-aspartate + ATP = (2S)-2-[5-amino-1-(5-phospho-beta-D-ribosyl)imidazole-4-carboxamido]succinate + ADP + phosphate + 2 H(+). The protein operates within purine metabolism; IMP biosynthesis via de novo pathway; 5-amino-1-(5-phospho-D-ribosyl)imidazole-4-carboxamide from 5-amino-1-(5-phospho-D-ribosyl)imidazole-4-carboxylate: step 1/2. The chain is Phosphoribosylaminoimidazole-succinocarboxamide synthase from Xylella fastidiosa (strain Temecula1 / ATCC 700964).